Here is a 1052-residue protein sequence, read N- to C-terminus: Fibroblast growth factor receptor homolog 2 (1052 aa).

The first 19 residues, 1 to 19 (MAKVPITLVMIIAIVSAAA), serve as a signal peptide directing secretion. Over 20–600 (DLGCDYGHHR…EIYALLHAHP (581 aa)) the chain is Extracellular. 3 consecutive Ig-like C2-type domains span residues 23–117 (CDYG…IASF), 124–230 (PALP…PTQL), and 240–340 (PMLK…RTVA). The cysteines at positions 30 and 90 are disulfide-linked. N99, N137, N175, N181, N249, and N257 each carry an N-linked (GlcNAc...) asparagine glycan. C164 and C217 are disulfide-bonded. A disulfide bond links C262 and C329. Low complexity predominate over residues 358–372 (TTTTTVASPIPTAST). The segment at 358–393 (TTTTTVASPIPTASTGEDNDDDVENPAAEASGGVGP) is disordered. 2 Ig-like C2-type domains span residues 393 to 478 (PPVF…FSVQ) and 487 to 585 (PIIV…RVVS). C416 and C462 are disulfide-bonded. N-linked (GlcNAc...) asparagine glycosylation is found at N423, N444, N494, N500, N526, N541, N546, N555, and N576. The cysteines at positions 507 and 566 are disulfide-linked. The chain crosses the membrane as a helical span at residues 601-626 (LGFTLAAITIVALFLLGSAFITFMLR). The Cytoplasmic segment spans residues 627–1052 (RLRREKLLKL…LRYQYTYKFN (426 aa)). Positions 712–1000 (LSLGSILGEG…ELVESFDGIL (289 aa)) constitute a Protein kinase domain. ATP contacts are provided by residues 718 to 726 (LGEGAFGRV) and K748. D864 (proton acceptor) is an active-site residue. Residue Y895 is modified to Phosphotyrosine; by autocatalysis. The disordered stretch occupies residues 1017–1038 (PMLETPPSSGDEDDGSDTETFR).

Belongs to the protein kinase superfamily. Tyr protein kinase family. Fibroblast growth factor receptor subfamily. During embryogenesis, expression is seen in mesoderm, endodermal precursor cells, CNS midline cells and trachea and salivary duct ectodermal cells.

It is found in the membrane. The enzyme catalyses L-tyrosyl-[protein] + ATP = O-phospho-L-tyrosyl-[protein] + ADP + H(+). May be required for patterning of muscle precursor cells: generation of mesodermal and endodermal layers, invaginations of various types of cells, and CNS formation. Essential for the ability of the migrating tracheal and midline cells to recognize external guiding cues. This chain is Fibroblast growth factor receptor homolog 2 (btl), found in Drosophila melanogaster (Fruit fly).